Consider the following 270-residue polypeptide: Ribosomal RNA small subunit methyltransferase A (270 aa).

S-adenosyl-L-methionine-binding residues include asparagine 18, leucine 20, glycine 45, glutamate 66, aspartate 91, and asparagine 112.

This sequence belongs to the class I-like SAM-binding methyltransferase superfamily. rRNA adenine N(6)-methyltransferase family. RsmA subfamily.

Its subcellular location is the cytoplasm. It catalyses the reaction adenosine(1518)/adenosine(1519) in 16S rRNA + 4 S-adenosyl-L-methionine = N(6)-dimethyladenosine(1518)/N(6)-dimethyladenosine(1519) in 16S rRNA + 4 S-adenosyl-L-homocysteine + 4 H(+). Its function is as follows. Specifically dimethylates two adjacent adenosines (A1518 and A1519) in the loop of a conserved hairpin near the 3'-end of 16S rRNA in the 30S particle. May play a critical role in biogenesis of 30S subunits. The polypeptide is Ribosomal RNA small subunit methyltransferase A (Shewanella piezotolerans (strain WP3 / JCM 13877)).